A 1149-amino-acid polypeptide reads, in one-letter code: Golgi apparatus protein 1 homolog (1149 aa).

The N-terminal stretch at 1 to 19 is a signal peptide; it reads MWRFPLILASVCWLTTAQQ. Over 20 to 1115 the chain is Extracellular; that stretch reads QNVANDPDKK…NLVMEHPERN (1096 aa). 16 Cys-rich GLG1 repeats span residues 24–69, 71–135, 139–207, 216–276, 277–344, 349–411, 415–475, 477–549, 551–610, 613–676, 677–736, 743–803, 809–867, 868–938, 945–1009, and 1010–1070; these read NDPD…FSET, TLSE…KNVT, KCHA…VKNA, ILGD…NDKF, MDPE…NQPE, QPSK…ESRN, KLGA…NVDS, DMVP…YDEQ, PLSV…ETDN, RKHP…DAKE, MNNK…FEHK, DLTD…IECL, HLGP…IVRL, LQRE…RQSI, DFSP…NKGL, and IRDK…DKQE. N-linked (GlcNAc...) asparagine glycosylation is present at asparagine 133. Asparagine 411 carries N-linked (GlcNAc...) asparagine glycosylation. Residues 1116-1136 form a helical membrane-spanning segment; sequence SILGYLAGFIVFILLIGCCCG. Topologically, residues 1137–1149 are cytoplasmic; that stretch reads RVSKKQYIEMKNR.

Its subcellular location is the membrane. The polypeptide is Golgi apparatus protein 1 homolog (Caenorhabditis elegans).